Here is a 95-residue protein sequence, read N- to C-terminus: uncharacterized protein (95 aa).

Residues 1-12 show a composition bias toward low complexity; sequence MQNFMNNLSGGS. Residues 1 to 27 are disordered; the sequence is MQNFMNNLSGGSNKEGGEKSNDFLSSA.

This is an uncharacterized protein from Schizosaccharomyces pombe (strain 972 / ATCC 24843) (Fission yeast).